The primary structure comprises 241 residues: Ubiquinone biosynthesis O-methyltransferase (241 aa).

Positions 46, 66, 87, and 131 each coordinate S-adenosyl-L-methionine.

It belongs to the methyltransferase superfamily. UbiG/COQ3 family.

The catalysed reaction is a 3-demethylubiquinol + S-adenosyl-L-methionine = a ubiquinol + S-adenosyl-L-homocysteine + H(+). It catalyses the reaction a 3-(all-trans-polyprenyl)benzene-1,2-diol + S-adenosyl-L-methionine = a 2-methoxy-6-(all-trans-polyprenyl)phenol + S-adenosyl-L-homocysteine + H(+). The protein operates within cofactor biosynthesis; ubiquinone biosynthesis. Its function is as follows. O-methyltransferase that catalyzes the 2 O-methylation steps in the ubiquinone biosynthetic pathway. The sequence is that of Ubiquinone biosynthesis O-methyltransferase from Bordetella parapertussis (strain 12822 / ATCC BAA-587 / NCTC 13253).